We begin with the raw amino-acid sequence, 500 residues long: Adenylosuccinate synthetase, chloroplastic (500 aa).

GTP-binding positions include Gly87 to Lys93 and Gly115 to Thr117. The active-site Proton acceptor is the Asp88. Residues Asp88 and Gly115 each contribute to the Mg(2+) site. IMP-binding positions include Asp88–Lys91, Asn113–His116, Thr205, Arg219, Gln299, Thr314, and Arg378. His116 serves as the catalytic Proton donor. A substrate-binding site is contributed by Thr374 to Arg380. GTP is bound by residues Arg380, Lys406–Asp408, and Gly489–Gly491.

It belongs to the adenylosuccinate synthetase family. Homodimer. Mg(2+) serves as cofactor.

The protein localises to the plastid. The protein resides in the chloroplast. The catalysed reaction is IMP + L-aspartate + GTP = N(6)-(1,2-dicarboxyethyl)-AMP + GDP + phosphate + 2 H(+). It functions in the pathway purine metabolism; AMP biosynthesis via de novo pathway; AMP from IMP: step 1/2. In terms of biological role, plays an important role in the de novo pathway and in the salvage pathway of purine nucleotide biosynthesis. Catalyzes the first committed step in the biosynthesis of AMP from IMP. The protein is Adenylosuccinate synthetase, chloroplastic of Solanum bulbocastanum (Wild potato).